The primary structure comprises 193 residues: Dense granule protein 2 (193 aa).

N4 carries N-linked (GlcNAc...) asparagine glycosylation. A helical transmembrane segment spans residues 14–34 (FSPLTVVMLAVTLVAFMGVPL). N-linked (GlcNAc...) asparagine glycosylation occurs at N74. The tract at residues 75 to 140 (SSELAGSRDK…APKPVPVRSA (66 aa)) is disordered. The span at 88–98 (EAEEEAAEVET) shows a compositional bias: acidic residues. The helical transmembrane segment at 153 to 173 (HRVIGTAVIAAVVAALLWKFS) threads the bilayer. The interval 174–193 (RRRSGAPREGGENENGGEEK) is disordered.

This sequence belongs to the Gra6 family.

The protein localises to the membrane. The polypeptide is Dense granule protein 2 (DG2) (Neospora caninum (Coccidian parasite)).